We begin with the raw amino-acid sequence, 281 residues long: RNA polymerase sigma factor RpoH (281 aa).

Positions 52–121 (LILSHLRFVI…IHEYVLRNWR (70 aa)) are sigma-70 factor domain-2. The Interaction with polymerase core subunit RpoC motif lies at 76–79 (DLIQ). Residues 226-277 (ALQSLDARSQDIIKARWLDDNKATLHDLAAKYNVSAERIRQLETNALKKLKS) are sigma-70 factor domain-4. Residues 250 to 269 (LHDLAAKYNVSAERIRQLET) constitute a DNA-binding region (H-T-H motif).

It belongs to the sigma-70 factor family. RpoH subfamily. In terms of assembly, interacts with the RNA polymerase core enzyme.

The protein resides in the cytoplasm. Its function is as follows. Sigma factors are initiation factors that promote the attachment of RNA polymerase to specific initiation sites and are then released. This sigma factor is involved in regulation of expression of heat shock genes. The polypeptide is RNA polymerase sigma factor RpoH (Haemophilus influenzae (strain ATCC 51907 / DSM 11121 / KW20 / Rd)).